Here is a 741-residue protein sequence, read N- to C-terminus: Cysteine--tRNA ligase, cytoplasmic (741 aa).

C46 is a Zn(2+) binding site. Residues 48-58 (PTVYDASHMGH) carry the 'HIGH' region motif. S297 is modified (phosphoserine). Residues C340, H365, and E369 each coordinate Zn(2+). A 'KMSKS' region motif is present at residues 398-402 (KMSKS). Position 401 (K401) interacts with ATP. The interval 697-718 (FDENGLPTHDKEGKEVSKGQIK) is disordered. Over residues 704 to 713 (THDKEGKEVS) the composition is skewed to basic and acidic residues.

The protein belongs to the class-I aminoacyl-tRNA synthetase family. It depends on Zn(2+) as a cofactor.

It localises to the cytoplasm. The catalysed reaction is tRNA(Cys) + L-cysteine + ATP = L-cysteinyl-tRNA(Cys) + AMP + diphosphate. The protein is Cysteine--tRNA ligase, cytoplasmic of Drosophila melanogaster (Fruit fly).